We begin with the raw amino-acid sequence, 43 residues long: Cytochrome b559 subunit beta (43 aa).

The chain crosses the membrane as a helical span at residues 18–34 (WLAIHGLAIPTVFFLGG). His-22 contacts heme.

Belongs to the PsbE/PsbF family. Heterodimer of an alpha subunit and a beta subunit. PSII is composed of 1 copy each of membrane proteins PsbA, PsbB, PsbC, PsbD, PsbE, PsbF, PsbH, PsbI, PsbJ, PsbK, PsbL, PsbM, PsbT, PsbX, PsbY, PsbZ, Psb30/Ycf12, at least 3 peripheral proteins of the oxygen-evolving complex and a large number of cofactors. It forms dimeric complexes. The cofactor is heme b.

The protein localises to the plastid. It is found in the chloroplast thylakoid membrane. Functionally, this b-type cytochrome is tightly associated with the reaction center of photosystem II (PSII). PSII is a light-driven water:plastoquinone oxidoreductase that uses light energy to abstract electrons from H(2)O, generating O(2) and a proton gradient subsequently used for ATP formation. It consists of a core antenna complex that captures photons, and an electron transfer chain that converts photonic excitation into a charge separation. This is Cytochrome b559 subunit beta from Trieres chinensis (Marine centric diatom).